The following is a 297-amino-acid chain: Probable oxidoreductase (297 aa).

9–33 (VVTGGASGLGAETVRALAAAGAEVT) is a binding site for NAD(+). Residue S138 coordinates substrate. Y164 (proton acceptor) is an active-site residue.

It belongs to the short-chain dehydrogenases/reductases (SDR) family.

In Streptomyces lividans, this protein is Probable oxidoreductase.